The sequence spans 512 residues: Histidine ammonia-lyase (512 aa).

The 5-imidazolinone (Ala-Gly) cross-link spans 145-147; that stretch reads ASG. At serine 146 the chain carries 2,3-didehydroalanine (Ser).

Belongs to the PAL/histidase family. In terms of processing, contains an active site 4-methylidene-imidazol-5-one (MIO), which is formed autocatalytically by cyclization and dehydration of residues Ala-Ser-Gly.

The protein resides in the cytoplasm. It carries out the reaction L-histidine = trans-urocanate + NH4(+). It functions in the pathway amino-acid degradation; L-histidine degradation into L-glutamate; N-formimidoyl-L-glutamate from L-histidine: step 1/3. The protein is Histidine ammonia-lyase of Pseudomonas fluorescens (strain SBW25).